Consider the following 112-residue polypeptide: uncharacterized protein (112 aa).

The HTH cro/C1-type domain maps to 6 to 60 (LRQLRKAHKLTMEQLAEKIGIAKSSYGGYEAESKKPPLDKLVILARLYDVSVDYI). Positions 17 to 36 (MEQLAEKIGIAKSSYGGYEA) form a DNA-binding region, H-T-H motif.

This is an uncharacterized protein from Bacillus subtilis (strain 168).